Reading from the N-terminus, the 782-residue chain is MSDQKKEEEEEAAAAMATEGGKTSEPENNNKKPKTSGSQDSHPSPLALLAATCSKIGTPGENQATGQQQIIIDPSQGLVQLQNQPQQLELVTTQLAGNAWQLVASTPPASKENNVSQPASSSSSSSSSNNGSSSPTKTKSGNPSTPNQFQVIQVQNPSGSVQYQVIPQLQTVEGQQIQINPTSSSSLQDLQGQIQLISAGNNQAILTAANRTASGNILAQNLANQTVPVQIRPGVSIPLQLQTLPGTQAQVVTTLPINIGGVTLALPVINNVTAGGGTGQVGQPTTTTDSGTSNGNQLVSTPTTSTAPASTMPESPSSSTTCTTTASTTLTSSDTLVSSADTGQYASTSASSSERTIEEPQTPAATESEAQSSSQLQSNGIQNAQDQSNSLQQVQIVGQPILQQIQIQQPQQQIIQAIPPQSFQLQSGQTIQTIQQQPLQNVQLQAVNPTQVLIRAPTLTPSGQISWQTVQVQNIQSLSNLQVQNAGLSQQLTITPVSSSGGTTLAQIAPVAVAGAPITLNTAQLASVPNLQTVSVANLGAAGVQVQGVPVTITSVAGQQQGQDGVKVQQATIAPVTVAVGGIANATIGAVSPDQLTQVHLQQGQQTSDAEVQPGKRLRRVACSCPNCREGEGRGSSEPGKKKQHVCHIEGCGKVYGKTSHLRAHLRWHTGERPFICNWMFCGKRFTRSDELQRHRRTHTGEKRFECPECSKRFMRSDHLSKHVKTHQNKKGGGTALAIVTSGELDSSVTEVLGSPRIVTVAAISQDSNPATPNVSTNMEEF.

3 disordered regions span residues 1 to 48 (MSDQ…PLAL), 107 to 148 (PPAS…TPNQ), and 275 to 385 (GGGT…QNAQ). Ser-44 bears the Phosphoserine mark. Residues 107–119 (PPASKENNVSQPA) are compositionally biased toward polar residues. Low complexity-rich tracts occupy residues 120–146 (SSSS…PSTP) and 281–342 (VGQP…SADT). Over residues 344-354 (QYASTSASSSE) the composition is skewed to polar residues. Low complexity predominate over residues 364-378 (AATESEAQSSSQLQS). The 9aaTAD; inactive signature appears at 465 to 473 (ISWQTVQVQ). 3 consecutive C2H2-type zinc fingers follow at residues 645 to 669 (HVCH…LRWH), 675 to 699 (FICN…RRTH), and 705 to 727 (FECP…VKTH).

Belongs to the Sp1 C2H2-type zinc-finger protein family. Expressed in many tissues.

Its subcellular location is the nucleus. In terms of biological role, binds to GT and GC boxes promoters elements. Probable transcriptional activator. Required for normal male reproductive behavior. The chain is Transcription factor Sp4 (Sp4) from Mus musculus (Mouse).